Here is a 106-residue protein sequence, read N- to C-terminus: UPF0145 protein BH0643 (106 aa).

The protein belongs to the UPF0145 family.

The protein is UPF0145 protein BH0643 of Halalkalibacterium halodurans (strain ATCC BAA-125 / DSM 18197 / FERM 7344 / JCM 9153 / C-125) (Bacillus halodurans).